The chain runs to 288 residues: Diaminopimelate epimerase (288 aa).

Residues N13, Q46, and N66 each coordinate substrate. The Proton donor role is filled by C75. Residues 76–77, N166, N199, and 217–218 each bind substrate; these read GN and ER. The active-site Proton acceptor is C226. 227-228 is a substrate binding site; sequence GT.

It belongs to the diaminopimelate epimerase family. In terms of assembly, homodimer.

Its subcellular location is the cytoplasm. It catalyses the reaction (2S,6S)-2,6-diaminopimelate = meso-2,6-diaminopimelate. The protein operates within amino-acid biosynthesis; L-lysine biosynthesis via DAP pathway; DL-2,6-diaminopimelate from LL-2,6-diaminopimelate: step 1/1. In terms of biological role, catalyzes the stereoinversion of LL-2,6-diaminopimelate (L,L-DAP) to meso-diaminopimelate (meso-DAP), a precursor of L-lysine and an essential component of the bacterial peptidoglycan. This is Diaminopimelate epimerase from Cupriavidus pinatubonensis (strain JMP 134 / LMG 1197) (Cupriavidus necator (strain JMP 134)).